The chain runs to 1058 residues: Carbamoyl phosphate synthase large chain (1058 aa).

The carboxyphosphate synthetic domain stretch occupies residues 1 to 399; it reads MPIDKDIKKV…AIQKAIRSLD (399 aa). ATP-binding residues include Arg-127, Arg-167, Gly-173, Gly-174, Glu-206, Val-208, Glu-213, Gly-239, Ile-240, His-241, Gln-282, and Glu-296. The ATP-grasp 1 domain maps to 131–325; the sequence is GHFMDKLNEP…IAKISSKIAL (195 aa). 3 residues coordinate Mg(2+): Gln-282, Glu-296, and Asn-298. 3 residues coordinate Mn(2+): Gln-282, Glu-296, and Asn-298. Positions 400–538 are oligomerization domain; the sequence is MGHDGFEYVE…YSTYDSGNEL (139 aa). A carbamoyl phosphate synthetic domain region spans residues 539–924; that stretch reads KSSNKKKIVI…YKSQLAAGMD (386 aa). In terms of domain architecture, ATP-grasp 2 spans 663 to 856; the sequence is AKLLNKLHIH…LAKVATWIMT (194 aa). 10 residues coordinate ATP: Arg-699, Lys-738, Leu-740, Glu-745, Gly-770, Val-771, His-772, Ser-773, Gln-813, and Glu-827. 3 residues coordinate Mg(2+): Gln-813, Glu-827, and Asn-829. Gln-813, Glu-827, and Asn-829 together coordinate Mn(2+). The region spanning 923–1058 is the MGS-like domain; that stretch reads MDLPKEGKIF…KSLNEHIDGE (136 aa). The tract at residues 925–1058 is allosteric domain; sequence LPKEGKIFIS…KSLNEHIDGE (134 aa).

This sequence belongs to the CarB family. As to quaternary structure, composed of two chains; the small (or glutamine) chain promotes the hydrolysis of glutamine to ammonia, which is used by the large (or ammonia) chain to synthesize carbamoyl phosphate. Tetramer of heterodimers (alpha,beta)4. The cofactor is Mg(2+). Mn(2+) is required as a cofactor.

The enzyme catalyses hydrogencarbonate + L-glutamine + 2 ATP + H2O = carbamoyl phosphate + L-glutamate + 2 ADP + phosphate + 2 H(+). It carries out the reaction hydrogencarbonate + NH4(+) + 2 ATP = carbamoyl phosphate + 2 ADP + phosphate + 2 H(+). The protein operates within amino-acid biosynthesis; L-arginine biosynthesis; carbamoyl phosphate from bicarbonate: step 1/1. It participates in pyrimidine metabolism; UMP biosynthesis via de novo pathway; (S)-dihydroorotate from bicarbonate: step 1/3. Large subunit of the glutamine-dependent carbamoyl phosphate synthetase (CPSase). CPSase catalyzes the formation of carbamoyl phosphate from the ammonia moiety of glutamine, carbonate, and phosphate donated by ATP, constituting the first step of 2 biosynthetic pathways, one leading to arginine and/or urea and the other to pyrimidine nucleotides. The large subunit (synthetase) binds the substrates ammonia (free or transferred from glutamine from the small subunit), hydrogencarbonate and ATP and carries out an ATP-coupled ligase reaction, activating hydrogencarbonate by forming carboxy phosphate which reacts with ammonia to form carbamoyl phosphate. This is Carbamoyl phosphate synthase large chain from Methanobrevibacter smithii (strain ATCC 35061 / DSM 861 / OCM 144 / PS).